Reading from the N-terminus, the 32-residue chain is Cytochrome b6-f complex subunit 7 (32 aa).

A helical transmembrane segment spans residues 5 to 25; it reads IFGTAAIFWVLIPAGLLGGAL.

Belongs to the PetM family. The 4 large subunits of the cytochrome b6-f complex are cytochrome b6, subunit IV (17 kDa polypeptide, PetD), cytochrome f and the Rieske protein, while the 4 small subunits are PetG, PetL, PetM and PetN. The complex functions as a dimer.

The protein localises to the cellular thylakoid membrane. Component of the cytochrome b6-f complex, which mediates electron transfer between photosystem II (PSII) and photosystem I (PSI), cyclic electron flow around PSI, and state transitions. The protein is Cytochrome b6-f complex subunit 7 of Prochlorococcus marinus (strain SARG / CCMP1375 / SS120).